A 417-amino-acid polypeptide reads, in one-letter code: UDP-N-acetylglucosamine 1-carboxyvinyltransferase (417 aa).

Residue 22-23 (KN) participates in phosphoenolpyruvate binding. Arg-91 is a UDP-N-acetyl-alpha-D-glucosamine binding site. Cys-115 functions as the Proton donor in the catalytic mechanism. Cys-115 bears the 2-(S-cysteinyl)pyruvic acid O-phosphothioketal mark. UDP-N-acetyl-alpha-D-glucosamine-binding positions include 120–124 (RPVDQ), Asp-304, and Ile-326.

The protein belongs to the EPSP synthase family. MurA subfamily.

The protein resides in the cytoplasm. The enzyme catalyses phosphoenolpyruvate + UDP-N-acetyl-alpha-D-glucosamine = UDP-N-acetyl-3-O-(1-carboxyvinyl)-alpha-D-glucosamine + phosphate. It functions in the pathway cell wall biogenesis; peptidoglycan biosynthesis. Functionally, cell wall formation. Adds enolpyruvyl to UDP-N-acetylglucosamine. The chain is UDP-N-acetylglucosamine 1-carboxyvinyltransferase from Desulfovibrio desulfuricans (strain ATCC 27774 / DSM 6949 / MB).